The primary structure comprises 230 residues: tRNA (guanine-N(1)-)-methyltransferase (230 aa).

S-adenosyl-L-methionine-binding positions include glycine 114 and 138 to 143; that span reads IGDYVL.

The protein belongs to the RNA methyltransferase TrmD family. Homodimer.

The protein localises to the cytoplasm. The enzyme catalyses guanosine(37) in tRNA + S-adenosyl-L-methionine = N(1)-methylguanosine(37) in tRNA + S-adenosyl-L-homocysteine + H(+). Specifically methylates guanosine-37 in various tRNAs. The protein is tRNA (guanine-N(1)-)-methyltransferase of Rhodococcus jostii (strain RHA1).